A 286-amino-acid chain; its full sequence is Tyrosine recombinase XerA (286 aa).

Residues 5–82 (TLRSEVLEEF…ALKAYFKFEG (78 aa)) enclose the Core-binding (CB) domain. The region spanning 98-274 (TLPKSLTEEE…TAKHLKEAVE (177 aa)) is the Tyr recombinase domain. Residues Arg-135, Lys-160, His-226, Arg-229, and His-252 contribute to the active site. Catalysis depends on Tyr-261, which acts as the O-(3'-phospho-DNA)-tyrosine intermediate.

The protein belongs to the 'phage' integrase family. XerA subfamily.

The protein localises to the cytoplasm. Its function is as follows. Site-specific tyrosine recombinase, which acts by catalyzing the cutting and rejoining of the recombining DNA molecules. The sequence is that of Tyrosine recombinase XerA from Pyrococcus furiosus (strain ATCC 43587 / DSM 3638 / JCM 8422 / Vc1).